Consider the following 145-residue polypeptide: Large ribosomal subunit protein uL13 (145 aa).

It belongs to the universal ribosomal protein uL13 family. Part of the 50S ribosomal subunit.

Its function is as follows. This protein is one of the early assembly proteins of the 50S ribosomal subunit, although it is not seen to bind rRNA by itself. It is important during the early stages of 50S assembly. This is Large ribosomal subunit protein uL13 from Bacillus cytotoxicus (strain DSM 22905 / CIP 110041 / 391-98 / NVH 391-98).